The sequence spans 303 residues: D-alanine--D-alanine ligase (303 aa).

Residues 99 to 293 enclose the ATP-grasp domain; the sequence is TYRFLKGTVE…FEELVEIILK (195 aa). Residue 125-176 participates in ATP binding; that stretch reads GYPCVVKPRREGSSIGVFVCESDEEFQHALKEDLPRYGSVIVQKYIPGREMT. 3 residues coordinate Mg(2+): D248, E260, and N262.

Belongs to the D-alanine--D-alanine ligase family. Mg(2+) serves as cofactor. Mn(2+) is required as a cofactor.

It is found in the cytoplasm. The enzyme catalyses 2 D-alanine + ATP = D-alanyl-D-alanine + ADP + phosphate + H(+). It functions in the pathway cell wall biogenesis; peptidoglycan biosynthesis. Its function is as follows. Cell wall formation. This is D-alanine--D-alanine ligase from Thermotoga maritima (strain ATCC 43589 / DSM 3109 / JCM 10099 / NBRC 100826 / MSB8).